We begin with the raw amino-acid sequence, 90 residues long: Keratin-associated protein 19-1 (90 aa).

The 26 X 2 AA repeats of G-[YCGS] stretch occupies residues 5–84; that stretch reads GSYYGGLGYS…CCRPSYNGGY (80 aa).

It belongs to the KRTAP type 19 family. Interacts with hair keratins. In terms of tissue distribution, detected in the upper portion of the hair cortex.

In the hair cortex, hair keratin intermediate filaments are embedded in an interfilamentous matrix, consisting of hair keratin-associated proteins (KRTAP), which are essential for the formation of a rigid and resistant hair shaft through their extensive disulfide bond cross-linking with abundant cysteine residues of hair keratins. The matrix proteins include the high-sulfur and high-glycine-tyrosine keratins. The chain is Keratin-associated protein 19-1 (KRTAP19-1) from Homo sapiens (Human).